The primary structure comprises 504 residues: Maturase K (504 aa).

This sequence belongs to the intron maturase 2 family. MatK subfamily.

It localises to the plastid. Its subcellular location is the chloroplast. Functionally, usually encoded in the trnK tRNA gene intron. Probably assists in splicing its own and other chloroplast group II introns. This Quercus gemelliflora (Pasang hiris) protein is Maturase K.